The sequence spans 183 residues: Threonylcarbamoyl-AMP synthase (183 aa).

Residues 1–183 form the YrdC-like domain; the sequence is MNITQIIEKL…LFTNQLVRQG (183 aa).

This sequence belongs to the SUA5 family. TsaC subfamily.

It is found in the cytoplasm. The catalysed reaction is L-threonine + hydrogencarbonate + ATP = L-threonylcarbamoyladenylate + diphosphate + H2O. Required for the formation of a threonylcarbamoyl group on adenosine at position 37 (t(6)A37) in tRNAs that read codons beginning with adenine. Catalyzes the conversion of L-threonine, HCO(3)(-)/CO(2) and ATP to give threonylcarbamoyl-AMP (TC-AMP) as the acyladenylate intermediate, with the release of diphosphate. This chain is Threonylcarbamoyl-AMP synthase, found in Histophilus somni (strain 2336) (Haemophilus somnus).